We begin with the raw amino-acid sequence, 28 residues long: Putative GDSL-motif lipase/hydrolase-like protein (28 aa).

The protein belongs to the 'GDSL' lipolytic enzyme family.

The sequence is that of Putative GDSL-motif lipase/hydrolase-like protein from Populus euphratica (Euphrates poplar).